Consider the following 354-residue polypeptide: Short-chain dehydrogenase/reductase SAT2 (354 aa).

Residues Ile-31, Asp-85, Arg-201, and Val-233 each contribute to the NADP(+) site.

Belongs to the short-chain dehydrogenases/reductases (SDR) family.

It participates in mycotoxin biosynthesis. Short-chain dehydrogenase/reductase; part of the satratoxin SC1 cluster involved in the biosynthesis of satratoxins, trichothecene mycotoxins that are associated with human food poisonings. Satratoxins are suggested to be made by products of multiple gene clusters (SC1, SC2 and SC3) that encode 21 proteins in all, including polyketide synthases, acetyltransferases, and other enzymes expected to modify the trichothecene skeleton. SC1 encodes 10 proteins, SAT1 to SAT10. The largest are SAT8, which encodes a putative polyketide synthase (PKS) with a conventional non-reducing architecture, and SAT10, a putative protein containing four ankyrin repeats and thus may be involved in protein scaffolding. The putative short-chain reductase SAT3 may assist the PKS in some capacity. SAT6 contains a secretory lipase domain and acts probably as a trichothecene esterase. SAT5 encodes a putative acetyltransferase, and so, with SAT6, may affect endogenous protection from toxicity. The probable transcription factor SAT9 may regulate the expression of the SC1 cluster. SC2 encodes proteins SAT11 to SAT16, the largest of which encodes the putative reducing PKS SAT13. SAT11 is a cytochrome P450 monooxygenase, while SAT14 and SAT16 are probable acetyltransferases. The SC2 cluster may be regulated by the transcription factor SAT15. SC3 is a small cluster that encodes 5 proteins, SAT17 to SAT21. SAT21 is a putative MFS-type transporter which may have a role in exporting secondary metabolites. The four other proteins putatively encoded in SC3 include the taurine hydroxylase-like protein SAT17, the O-methyltransferase SAT18, the acetyltransferase SAT19, and the Cys6-type zinc finger SAT20, the latter being probably involved in regulation of SC3 expression. The polypeptide is Short-chain dehydrogenase/reductase SAT2 (Stachybotrys chartarum (strain CBS 109288 / IBT 7711) (Toxic black mold)).